Here is a 455-residue protein sequence, read N- to C-terminus: Phosphoglucosamine mutase (455 aa).

Catalysis depends on Ser108, which acts as the Phosphoserine intermediate. Residues Ser108, Asp246, Asp248, and Asp250 each coordinate Mg(2+). Ser108 carries the phosphoserine modification.

Belongs to the phosphohexose mutase family. Mg(2+) serves as cofactor. Post-translationally, activated by phosphorylation.

The enzyme catalyses alpha-D-glucosamine 1-phosphate = D-glucosamine 6-phosphate. Functionally, catalyzes the conversion of glucosamine-6-phosphate to glucosamine-1-phosphate. The polypeptide is Phosphoglucosamine mutase (Frankia casuarinae (strain DSM 45818 / CECT 9043 / HFP020203 / CcI3)).